An 89-amino-acid polypeptide reads, in one-letter code: Small ribosomal subunit protein uS15 (89 aa).

The protein belongs to the universal ribosomal protein uS15 family. In terms of assembly, part of the 30S ribosomal subunit. Forms a bridge to the 50S subunit in the 70S ribosome, contacting the 23S rRNA.

In terms of biological role, one of the primary rRNA binding proteins, it binds directly to 16S rRNA where it helps nucleate assembly of the platform of the 30S subunit by binding and bridging several RNA helices of the 16S rRNA. Functionally, forms an intersubunit bridge (bridge B4) with the 23S rRNA of the 50S subunit in the ribosome. The chain is Small ribosomal subunit protein uS15 from Magnetococcus marinus (strain ATCC BAA-1437 / JCM 17883 / MC-1).